We begin with the raw amino-acid sequence, 260 residues long: MGGSESTGRKVSFGMDEEERVRVLRGVRLSDEVVNRMKDSNLPSKDQSTSTASGTTSGPTTFPSKAGPSASHSASTSKDGAHKPTARGVGHQYAEEDLYRRYEKEQALIQEELARLAKREREAAHERLSSSVLREKNITSQERRKAEHLPADLDEWAKELEQKEAELQRLNTFYREQLNSIEKKNLEIYKLTAEQFHTAASNAELRVKQRSYDPVCMDLQSNILKCYAENKQERLNCSDLAKEYGKCVSAAQKNLLFNHG.

Residues 1-92 form a disordered region; sequence MGGSESTGRK…KPTARGVGHQ (92 aa). G2 is lipidated: N-myristoyl glycine. Basic and acidic residues predominate over residues 28 to 39; the sequence is RLSDEVVNRMKD. The span at 48-64 shows a compositional bias: low complexity; sequence STSTASGTTSGPTTFPS. Residues 94 to 187 are a coiled coil; it reads AEEDLYRRYE…LNSIEKKNLE (94 aa). One can recognise a CHCH domain in the interval 213 to 255; sequence DPVCMDLQSNILKCYAENKQERLNCSDLAKEYGKCVSAAQKNL. 2 short sequence motifs (cx9C motif) span residues 216–226 and 237–247; these read CMDLQSNILKC and CSDLAKEYGKC. Disulfide bonds link C216–C247 and C226–C237.

It belongs to the MICOS complex subunit Mic19 family. Metazoan Mic25 subfamily. In terms of assembly, component of the mitochondrial contact site and cristae organizing system (MICOS) complex (also known as MINOS or MitOS complex).

It localises to the mitochondrion inner membrane. Component of the MICOS complex, a large protein complex of the mitochondrial inner membrane that plays crucial roles in the maintenance of crista junctions, inner membrane architecture, and formation of contact sites to the outer membrane. The chain is MICOS complex subunit mic25-a (chchd6-a) from Xenopus laevis (African clawed frog).